The chain runs to 468 residues: Sorting and assembly machinery component 50 homolog (468 aa).

A disordered region spans residues 1–24 (MGTVHARSLDPLPMNGPDFGSHDD). The POTRA domain occupies 44–124 (VVVQRVHFEG…LDVTFEVTEL (81 aa)).

The protein belongs to the SAM50/omp85 family. As to quaternary structure, associates with the mitochondrial contact site and cristae organizing system (MICOS) complex (also known as MINOS or MitOS complex).

The protein resides in the mitochondrion outer membrane. In terms of biological role, may play a role in the maintenance of the structure of mitochondrial cristae. This Xenopus tropicalis (Western clawed frog) protein is Sorting and assembly machinery component 50 homolog (samm50).